The following is a 217-amino-acid chain: Ribonuclease T (217 aa).

The region spanning 20-195 (VVVDVETAGF…YDTEKTAELF (176 aa)) is the Exonuclease domain. 4 residues coordinate Mg(2+): Asp-23, Glu-25, His-182, and Asp-187. The Proton donor/acceptor role is filled by His-182.

Belongs to the RNase T family. Homodimer. Mg(2+) is required as a cofactor.

Functionally, trims short 3' overhangs of a variety of RNA species, leaving a one or two nucleotide 3' overhang. Responsible for the end-turnover of tRNA: specifically removes the terminal AMP residue from uncharged tRNA (tRNA-C-C-A). Also appears to be involved in tRNA biosynthesis. This Vibrio vulnificus (strain CMCP6) protein is Ribonuclease T.